The primary structure comprises 323 residues: Malate dehydrogenase (323 aa).

Position 11–17 (11–17) interacts with NAD(+); sequence GAAGQIA. Substrate contacts are provided by Arg92 and Arg98. NAD(+) contacts are provided by residues Asn105, Gln112, and 129–131; that span reads VGN. Substrate-binding residues include Asn131 and Arg162. His187 serves as the catalytic Proton acceptor.

It belongs to the LDH/MDH superfamily. MDH type 2 family.

It carries out the reaction (S)-malate + NAD(+) = oxaloacetate + NADH + H(+). Its function is as follows. Catalyzes the reversible oxidation of malate to oxaloacetate. The protein is Malate dehydrogenase of Corynebacterium efficiens (strain DSM 44549 / YS-314 / AJ 12310 / JCM 11189 / NBRC 100395).